The primary structure comprises 635 residues: MVSIRLPDGSVRQYEHPVTVAEVAASIGPGLAKAALGGKLDGELVDTSALIDRDASLAIVTDKDADGLDIIRHSTAHLLAYAVKELHPDAQVTIGPVIDNGFYYDFSYHRPFTPEDLEAIEKRMQELAKRDEPVTRRVVSRDEAVSYFRSIGEKYKAEIIESIPASDEIKLYSHGSFTDLCRGPHVPSTGKLKVFKLMKVAGAYWRGDSKNEQLQRIYGTAWTRKEDQDAYLHMLEEAEKRDHRKLGKQLDLFHIQEEAPGMVFWHPKGWTLWQQVEQYMRRRLDAAGYLEIKTPMIMDRSLWEASGHWQNYRENMFTTESEKRDYAIKPMNCPGHVQVFKHGLRSYRDLPLRYAEFGSCHRNEASGALHGLMRVRGFVQDDAHIFCTEDQINSEAIAFNKLAMSVYEDFGFDRIDIKLSLRPEQRMGSDETWDHAEEGLRNALKACGLEWEELPGEGAFYGPKIEYHIKDALGRSWQCGTLQLDMMLPERLGAEYVAEDNSRRRPVMLHRAIVGSMERFLGILIEHHAGAMPVWLAPAHAVVLNIAESQAEYARTVAQSLQKQGLRVSADLRNEKISYKIREHTLEKVPYLLVVGDKEREAQTVAVRARGGVDLGVMPVEAFVERLREDIQAFK.

In terms of domain architecture, TGS spans 1–61; it reads MVSIRLPDGS…DRDASLAIVT (61 aa). Positions 242–533 are catalytic; it reads DHRKLGKQLD…LIEHHAGAMP (292 aa). 3 residues coordinate Zn(2+): C333, H384, and H510.

This sequence belongs to the class-II aminoacyl-tRNA synthetase family. Homodimer. Requires Zn(2+) as cofactor.

Its subcellular location is the cytoplasm. It catalyses the reaction tRNA(Thr) + L-threonine + ATP = L-threonyl-tRNA(Thr) + AMP + diphosphate + H(+). Catalyzes the attachment of threonine to tRNA(Thr) in a two-step reaction: L-threonine is first activated by ATP to form Thr-AMP and then transferred to the acceptor end of tRNA(Thr). Also edits incorrectly charged L-seryl-tRNA(Thr). The protein is Threonine--tRNA ligase of Burkholderia pseudomallei (strain 1106a).